The primary structure comprises 822 residues: Fibroblast growth factor receptor 1 (822 aa).

The signal sequence occupies residues 1-21; that stretch reads MWSWKCLLFWAVLVTATLCTA. Residues 22 to 376 lie on the Extracellular side of the membrane; sequence RPSPTLPEQA…AVMTSPLYLE (355 aa). Residues 25 to 119 enclose the Ig-like C2-type 1 domain; sequence PTLPEQAQPW…DTTYFSVNVS (95 aa). A disulfide bridge connects residues cysteine 55 and cysteine 101. Residues asparagine 77 and asparagine 117 are each glycosylated (N-linked (GlcNAc...) asparagine). The interval 120–154 is disordered; that stretch reads DALPSSEDDDDDDDSSSEEKETDNTKPNRMPVAPY. A compositionally biased stretch (acidic residues) spans 125-135; the sequence is SEDDDDDDDSS. Residues 136-145 show a composition bias toward basic and acidic residues; it reads SEEKETDNTK. Ig-like C2-type domains are found at residues 158 to 246 and 255 to 357; these read PEKM…YQLD and PILQ…AWLT. The tract at residues 160-177 is heparin-binding; it reads KMEKKLHAVPAAKTVKFK. A disulfide bridge links cysteine 178 with cysteine 230. N-linked (GlcNAc...) asparagine glycans are attached at residues asparagine 227, asparagine 240, asparagine 264, asparagine 296, asparagine 317, and asparagine 330. Cysteine 277 and cysteine 341 form a disulfide bridge. The chain crosses the membrane as a helical span at residues 377–397; that stretch reads IIIYCTGAFLISCMVGSVIVY. Over 398–822 the chain is Cytoplasmic; the sequence is KMKSGTKKSD…QLANGGLKRR (425 aa). Phosphotyrosine; by autocatalysis is present on tyrosine 463. The region spanning 478–767 is the Protein kinase domain; it reads LVLGKPLGEG…VALTSNQEYL (290 aa). ATP is bound by residues 484-490, lysine 514, 562-564, and asparagine 568; these read LGEGCFG and EYA. Phosphotyrosine; by autocatalysis is present on residues tyrosine 583 and tyrosine 585. Catalysis depends on aspartate 623, which acts as the Proton acceptor. Residues arginine 627 and aspartate 641 each contribute to the ATP site. A phosphotyrosine; by autocatalysis mark is found at tyrosine 653, tyrosine 654, tyrosine 730, and tyrosine 766. Residues 778-792 show a composition bias toward polar residues; the sequence is PSFPDTRSSTCSSGE. Positions 778–822 are disordered; the sequence is PSFPDTRSSTCSSGEDSVFSHEPLPEEPCLPRHPAQLANGGLKRR.

It belongs to the protein kinase superfamily. Tyr protein kinase family. Fibroblast growth factor receptor subfamily. As to quaternary structure, monomer. Homodimer after ligand binding. Interacts predominantly with FGF1 and FGF2, but can also interact with FGF3, FGF4, FGF5, FGF6, FGF8, FGF10, FGF19, FGF21, FGF22 and FGF23 (in vitro). Ligand specificity is determined by tissue-specific expression of isoforms, and differences in the third Ig-like domain are crucial for ligand specificity. Affinity for fibroblast growth factors (FGFs) is increased by heparan sulfate glycosaminoglycans that function as coreceptors. Likewise, KLB increases the affinity for FGF19, FGF21 and FGF23. Interacts (phosphorylated on Tyr-766) with PLCG1 (via SH2 domains). Interacts with FRS2. Interacts with RPS6KA1. Interacts (via C-terminus) with NEDD4 (via WW3 domain). Interacts with KL. Interacts with SHB (via SH2 domain). Interacts with GRB10. Interacts with ANOS1; this interaction does not interfere with FGF2-binding to FGFR1, but prevents binding of heparin-bound FGF2. Interacts with SOX2 and SOX3. Interacts with FLRT1, FLRT2 and FLRT3. Found in a ternary complex with FGF1 and ITGAV:ITGB3. Post-translationally, autophosphorylated. Binding of FGF family members together with heparan sulfate proteoglycan or heparin promotes receptor dimerization and autophosphorylation on tyrosine residues. Autophosphorylation occurs in trans between the two FGFR molecules present in the dimer and proceeds in a highly ordered manner. Initial autophosphorylation at Tyr-653 increases the kinase activity by a factor of 50 to 100. After this, Tyr-583 becomes phosphorylated, followed by phosphorylation of Tyr-463, Tyr-766, Tyr-583 and Tyr-585. In a third stage, Tyr-654 is autophosphorylated, resulting in a further tenfold increase of kinase activity. Phosphotyrosine residues provide docking sites for interacting proteins and so are crucial for FGFR1 function and its regulation. In terms of processing, ubiquitinated. FGFR1 is rapidly ubiquitinated by NEDD4 after autophosphorylation, leading to internalization and lysosomal degradation. CBL is recruited to activated FGFR1 via FRS2 and GRB2, and mediates ubiquitination and subsequent degradation of FGFR1. N-glycosylated in the endoplasmic reticulum. The N-glycan chains undergo further maturation to an Endo H-resistant form in the Golgi apparatus. As to expression, detected in astrocytoma, neuroblastoma and adrenal cortex cell lines. Some isoforms are detected in foreskin fibroblast cell lines, however isoform 17, isoform 18 and isoform 19 are not detected in these cells.

The protein resides in the cell membrane. It is found in the nucleus. It localises to the cytoplasm. The protein localises to the cytosol. Its subcellular location is the cytoplasmic vesicle. It carries out the reaction L-tyrosyl-[protein] + ATP = O-phospho-L-tyrosyl-[protein] + ADP + H(+). Its activity is regulated as follows. Present in an inactive conformation in the absence of bound ligand. Ligand binding leads to dimerization and activation by sequential autophosphorylation on tyrosine residues. Inhibited by ARQ 069; this compound maintains the kinase in an inactive conformation and inhibits autophosphorylation. Inhibited by PD173074. Its function is as follows. Tyrosine-protein kinase that acts as a cell-surface receptor for fibroblast growth factors and plays an essential role in the regulation of embryonic development, cell proliferation, differentiation and migration. Required for normal mesoderm patterning and correct axial organization during embryonic development, normal skeletogenesis and normal development of the gonadotropin-releasing hormone (GnRH) neuronal system. Phosphorylates PLCG1, FRS2, GAB1 and SHB. Ligand binding leads to the activation of several signaling cascades. Activation of PLCG1 leads to the production of the cellular signaling molecules diacylglycerol and inositol 1,4,5-trisphosphate. Phosphorylation of FRS2 triggers recruitment of GRB2, GAB1, PIK3R1 and SOS1, and mediates activation of RAS, MAPK1/ERK2, MAPK3/ERK1 and the MAP kinase signaling pathway, as well as of the AKT1 signaling pathway. Promotes phosphorylation of SHC1, STAT1 and PTPN11/SHP2. In the nucleus, enhances RPS6KA1 and CREB1 activity and contributes to the regulation of transcription. FGFR1 signaling is down-regulated by IL17RD/SEF, and by FGFR1 ubiquitination, internalization and degradation. The sequence is that of Fibroblast growth factor receptor 1 (FGFR1) from Homo sapiens (Human).